A 345-amino-acid polypeptide reads, in one-letter code: 3-isopropylmalate dehydrogenase (345 aa).

76–87 lines the NAD(+) pocket; sequence GPKYDNAPVRPE. Substrate contacts are provided by arginine 94, arginine 104, arginine 132, and aspartate 216. Aspartate 216, aspartate 240, and aspartate 244 together coordinate Mg(2+). 274 to 286 is an NAD(+) binding site; it reads GSAPDIAGQGIAN.

Belongs to the isocitrate and isopropylmalate dehydrogenases family. LeuB type 1 subfamily. As to quaternary structure, homodimer. Mg(2+) serves as cofactor. Mn(2+) is required as a cofactor.

It is found in the cytoplasm. It carries out the reaction (2R,3S)-3-isopropylmalate + NAD(+) = 4-methyl-2-oxopentanoate + CO2 + NADH. It functions in the pathway amino-acid biosynthesis; L-leucine biosynthesis; L-leucine from 3-methyl-2-oxobutanoate: step 3/4. Catalyzes the oxidation of 3-carboxy-2-hydroxy-4-methylpentanoate (3-isopropylmalate) to 3-carboxy-4-methyl-2-oxopentanoate. The product decarboxylates to 4-methyl-2 oxopentanoate. This is 3-isopropylmalate dehydrogenase from Streptococcus thermophilus (strain CNRZ 1066).